Here is a 163-residue protein sequence, read N- to C-terminus: Nucleotide-binding protein Acel_0286 (163 aa).

Belongs to the YajQ family.

Its function is as follows. Nucleotide-binding protein. This chain is Nucleotide-binding protein Acel_0286, found in Acidothermus cellulolyticus (strain ATCC 43068 / DSM 8971 / 11B).